The following is an 822-amino-acid chain: ATP-dependent zinc metalloprotease FTSH 7, chloroplastic (822 aa).

3 stretches are compositionally biased toward low complexity: residues methionine 1 to serine 34, alanine 80 to glycine 94, and alanine 101 to threonine 122. Disordered regions lie at residues methionine 1–arginine 44 and proline 67–tryptophan 136. Residues methionine 1–arginine 70 constitute a chloroplast transit peptide. 2 helical membrane-spanning segments follow: residues isoleucine 154–leucine 174 and glycine 288–leucine 308. Glycine 386 to threonine 393 contacts ATP. Position 611 (histidine 611) interacts with Zn(2+). Glutamate 612 is an active-site residue. Residues histidine 615 and aspartate 694 each coordinate Zn(2+).

This sequence in the N-terminal section; belongs to the AAA ATPase family. It in the C-terminal section; belongs to the peptidase M41 family. Zn(2+) is required as a cofactor.

It is found in the plastid. Its subcellular location is the chloroplast thylakoid membrane. Its function is as follows. Probable ATP-dependent zinc metallopeptidase. This chain is ATP-dependent zinc metalloprotease FTSH 7, chloroplastic (FTSH7), found in Oryza sativa subsp. japonica (Rice).